Consider the following 504-residue polypeptide: Histidine--tRNA ligase (504 aa).

This sequence belongs to the class-II aminoacyl-tRNA synthetase family. In terms of assembly, homodimer.

It localises to the cytoplasm. The catalysed reaction is tRNA(His) + L-histidine + ATP = L-histidyl-tRNA(His) + AMP + diphosphate + H(+). This is Histidine--tRNA ligase (hisS) from Rhizobium meliloti (strain 1021) (Ensifer meliloti).